A 282-amino-acid polypeptide reads, in one-letter code: Protoheme IX farnesyltransferase (282 aa).

9 helical membrane passes run 9-29 (LAKP…FLLA), 39-59 (LPLF…GCVF), 79-99 (LVTG…LLIL), 102-122 (LVLY…GFIV), 139-159 (VLGG…VVNI), 165-185 (LALF…IAML), 210-230 (IMLF…VLGS), 231-251 (ADLF…YKSI), and 261-281 (VFAK…CLTM).

The protein belongs to the UbiA prenyltransferase family. Protoheme IX farnesyltransferase subfamily.

It is found in the cell inner membrane. The catalysed reaction is heme b + (2E,6E)-farnesyl diphosphate + H2O = Fe(II)-heme o + diphosphate. Its pathway is porphyrin-containing compound metabolism; heme O biosynthesis; heme O from protoheme: step 1/1. Its function is as follows. Converts heme B (protoheme IX) to heme O by substitution of the vinyl group on carbon 2 of heme B porphyrin ring with a hydroxyethyl farnesyl side group. This is Protoheme IX farnesyltransferase from Francisella tularensis subsp. novicida (strain U112).